We begin with the raw amino-acid sequence, 432 residues long: MASSVRLVKKPVLVAPVDPTPSTVLSLSSLDSQLFLRFPIEYLLVYASPHGVDRAVTAARVKAALARSLVPYYPLAGRVKTRPDSTGLDVVCQAQGAGLLEAVSDYTASDFQRAPRSVTEWRKLLLVEVFKVVPPLVVQLTWLSDGCVALGVGFSHCVIDGIGSSEFLNLFAELATGRARLSEFQPKPVWDRHLLNSAGRTNLGTHPEFGRVPDLSGFVTRFTQERLSPTSITFDKTWLKELKNIAMSTSQPGEFPYTSFEVLSGHIWRSWARSLNLPAKQVLKLLFSINIRNRVKPSLPAGYYGNAFVLGCAQTSVKDLTEKGLGYCADLVRGAKERVGDEYAREVVESVSWPRRASPDSVGVLIISQWSRLGLDRVDFGLGRPVQVGPICCDRYCLFLPVRESTESVKVMVAVPTSAVDRYEYFIRSPYS.

Catalysis depends on proton acceptor residues H156 and D379.

The protein belongs to the plant acyltransferase family. As to expression, expressed in fruit.

The enzyme catalyses 2-(methylsulfanyl)acetyl-CoA + butan-1-ol = butyl 2-(methylsulfanyl)acetate + CoA. It catalyses the reaction ethanol + acetyl-CoA = ethyl acetate + CoA. It carries out the reaction butan-1-ol + acetyl-CoA = butyl acetate + CoA. The catalysed reaction is butan-1-ol + propanoyl-CoA = butyl propanoate + CoA. Involved in the biosynthesis of volatile esters which confer kiwifruit flavor. Alcohol acyl transferase that can use a wide range of alcohols as substrate to produce esters. Exhibits acetyl-CoA:alcohol O-acyltransferase activity. In Actinidia eriantha (Velvet vine), this protein is Alcohol acyltransferase 9.